A 753-amino-acid polypeptide reads, in one-letter code: Elongin-A2 (753 aa).

The TFIIS N-terminal domain maps to 5 to 80 (STTLHAVEKL…ARWKKLVLVD (76 aa)). 3 disordered regions span residues 80-245 (DRNT…DWHS), 261-453 (ETPR…GPKT), and 477-497 (LSDS…SPKF). Composition is skewed to basic and acidic residues over residues 147–157 (HSREPRAERKC) and 271–285 (ARDR…DKEG). Over residues 306-317 (KRPQHSHSNKKR) the composition is skewed to basic residues. Residues 333–348 (SPEEKEQLSNDRETQE) show a composition bias toward basic and acidic residues. Over residues 366–377 (EVEEVDMAEEFE) the composition is skewed to acidic residues. Residues 409–428 (DKQRKANESKGTRESWDSAK) show a composition bias toward basic and acidic residues. The activation domain stretch occupies residues 500-659 (EAAFPGRRVN…TPYDTSRRQE (160 aa)). The segment at 528 to 537 (TLRQQCAQVL) is BC-box. The interacting with Elongin BC complex stretch occupies residues 528–537 (TLRQQCAQVL). Residues 650–735 (TPYDTSRRQE…KTRKQAAKKV (86 aa)) form a disordered region. The span at 654–663 (TSRRQEKSAG) shows a compositional bias: basic and acidic residues. Residues 680–700 (GSSHTPSSQSSSGGGRDSSSS) are compositionally biased toward low complexity.

Heterotrimer of an A (ELOA, ELOA2 or ELOA3P), ELOB and ELOC subunit. Specifically expressed in testis.

The protein localises to the nucleus. Its function is as follows. SIII, also known as elongin, is a general transcription elongation factor that increases the RNA polymerase II transcription elongation past template-encoded arresting sites. Subunit A2 is transcriptionally active but its transcription activity is not enhanced by binding to the dimeric complex of the SIII regulatory subunits B and C (elongin BC complex). This is Elongin-A2 from Homo sapiens (Human).